We begin with the raw amino-acid sequence, 205 residues long: Small ribosomal subunit protein uS4 (205 aa).

Basic and acidic residues predominate over residues 1–16 (MSKRESSKYKIDRRMG). Positions 1-46 (MSKRESSKYKIDRRMGENIWGRPKSPVNRREYGPGQHGQRRKGKLS) are disordered. One can recognise an S4 RNA-binding domain in the interval 94-157 (SRLDAIVYRA…KQLVIVLEAV (64 aa)).

The protein belongs to the universal ribosomal protein uS4 family. In terms of assembly, part of the 30S ribosomal subunit. Contacts protein S5. The interaction surface between S4 and S5 is involved in control of translational fidelity.

One of the primary rRNA binding proteins, it binds directly to 16S rRNA where it nucleates assembly of the body of the 30S subunit. In terms of biological role, with S5 and S12 plays an important role in translational accuracy. This Rhizobium leguminosarum bv. trifolii (strain WSM2304) protein is Small ribosomal subunit protein uS4.